A 541-amino-acid chain; its full sequence is MAKMLKFGEDARRSMQIGVDKLADTVKVTLGPKGRNVVLDKKFGAPLITNDGVSIAREIELEDPYENMGAQLVKEVATKTNDVAGDGTTTATLLAQAIIREGLKNVTAGANPILIRTGIKMAVDKAVEEIQKISKQVDGKEDIARVAAISAADEEVGKLIADAMEKVGNEGVITIEESKSMGTELDVVEGMQFDRGYVSPYMATDTEKMEAVLENPYILITDKKISNIQEILPVLEQIVQSGKKLLIIAEDIEGEAMATLVVNKLRGTFTCVAVKAPGFGDRRKEMLQDIATLTGGTVIAEELGRELKDVTIDMLGTADSVKVSKENTVIVNGKGDSNAIKERINQIKAQIEETSSEFDKEKLQERLAKLAGGVAVIKVGAATETELKEKKLRIEDALAATKAAVEEGIVAGGGTAYVNVINEVAKLTSDVADTQIGINIIVKSLEEPVRQIATNAGVEGSVIIEKVKNSEPGIGYDALHGEYINMIKGGIVDPTKVTRSALQNAASVASTFLTTEAAVADIPAKETPMPGAPGMGMDGMY.

ATP is bound by residues 29-32, 86-90, Gly-413, 477-479, and Asp-493; these read TLGP, DGTTT, and DAL.

It belongs to the chaperonin (HSP60) family. Forms a cylinder of 14 subunits composed of two heptameric rings stacked back-to-back. Interacts with the co-chaperonin GroES.

Its subcellular location is the cytoplasm. It carries out the reaction ATP + H2O + a folded polypeptide = ADP + phosphate + an unfolded polypeptide.. In terms of biological role, together with its co-chaperonin GroES, plays an essential role in assisting protein folding. The GroEL-GroES system forms a nano-cage that allows encapsulation of the non-native substrate proteins and provides a physical environment optimized to promote and accelerate protein folding. This chain is Chaperonin GroEL, found in Clostridium beijerinckii (strain ATCC 51743 / NCIMB 8052) (Clostridium acetobutylicum).